A 356-amino-acid polypeptide reads, in one-letter code: Tyrosine recombinase XerS (356 aa).

In terms of domain architecture, Core-binding (CB) spans 16 to 121 (VMPPYVLEYY…ALSSLYKYLT (106 aa)). Positions 169-354 (GFLDYIDSEY…INEEQKNALD (186 aa)) constitute a Tyr recombinase domain. Catalysis depends on residues arginine 210, lysine 234, histidine 306, arginine 309, and histidine 332. Tyrosine 341 functions as the O-(3'-phospho-DNA)-tyrosine intermediate in the catalytic mechanism.

This sequence belongs to the 'phage' integrase family. XerS subfamily.

Its subcellular location is the cytoplasm. With respect to regulation, ftsK is required for recombination. Its function is as follows. Site-specific tyrosine recombinase, which acts by catalyzing the cutting and rejoining of the recombining DNA molecules. Essential to convert dimers of the bacterial chromosome into monomers to permit their segregation at cell division. The polypeptide is Tyrosine recombinase XerS (Lactococcus lactis subsp. cremoris (strain SK11)).